The primary structure comprises 560 residues: Glutamate--tRNA ligase, chloroplastic/mitochondrial (560 aa).

47–49 (RFA) is an L-glutamate binding site. The 'HIGH' region signature appears at 50–60 (PSPTGNLHVGG). Histidine 57 is a binding site for ATP. Residues glutamate 83, 235-239 (YNFCV), and arginine 253 contribute to the L-glutamate site. ATP is bound by residues glutamate 256 and 291–295 (KLSKR). A 'KMSKS' region motif is present at residues 291–295 (KLSKR).

The protein belongs to the class-I aminoacyl-tRNA synthetase family. Glutamate--tRNA ligase type 1 subfamily.

The protein localises to the plastid. It localises to the chloroplast. It is found in the mitochondrion. It carries out the reaction tRNA(Glu) + L-glutamate + ATP = L-glutamyl-tRNA(Glu) + AMP + diphosphate. Its function is as follows. Catalyzes the attachment of glutamate to tRNA(Glu) in a two-step reaction: glutamate is first activated by ATP to form Glu-AMP and then transferred to the acceptor end of tRNA(Glu). In Hordeum vulgare (Barley), this protein is Glutamate--tRNA ligase, chloroplastic/mitochondrial.